The chain runs to 148 residues: Arginine repressor (148 aa).

This sequence belongs to the ArgR family.

Its subcellular location is the cytoplasm. The protein operates within amino-acid biosynthesis; L-arginine biosynthesis [regulation]. Its function is as follows. Regulates arginine biosynthesis genes. This chain is Arginine repressor, found in Chlorobium limicola (strain DSM 245 / NBRC 103803 / 6330).